The sequence spans 543 residues: RuBisCO large subunit-binding protein subunit alpha, chloroplastic (543 aa).

Residues 1–2 (GA) constitute a chloroplast transit peptide.

It belongs to the chaperonin (HSP60) family. Oligomer of probably six alpha and six beta subunits.

The protein localises to the plastid. Its subcellular location is the chloroplast. Functionally, this protein binds RuBisCO small and large subunits and is implicated in the assembly of the enzyme oligomer. This is RuBisCO large subunit-binding protein subunit alpha, chloroplastic from Triticum aestivum (Wheat).